The following is a 190-amino-acid chain: GTP cyclohydrolase 1 (190 aa).

Residues cysteine 75, histidine 78, and cysteine 146 each coordinate Zn(2+).

The protein belongs to the GTP cyclohydrolase I family. Homomer.

The catalysed reaction is GTP + H2O = 7,8-dihydroneopterin 3'-triphosphate + formate + H(+). It participates in cofactor biosynthesis; 7,8-dihydroneopterin triphosphate biosynthesis; 7,8-dihydroneopterin triphosphate from GTP: step 1/1. This is GTP cyclohydrolase 1 from Campylobacter concisus (strain 13826).